The following is a 332-amino-acid chain: Mitochondrial glycine transporter (332 aa).

3 Solcar repeats span residues 11–94 (SSSY…LRQN), 121–205 (LSNL…LKKR), and 235–319 (TSAS…LIRR). 6 consecutive transmembrane segments (helical) span residues 17–42 (FGAGLGSGILSAVLLQPADLLKTRVQ), 69–95 (GTVPSALRTGFGSAIYFTSLNALRQNV), 127–152 (LTTGAVARAGAGFILMPMTIIKVRYE), 180–203 (GFGATAIRDAPYAGLYVLFYEELK), 239–265 (INFGSGVLAAGLATAITNPFDAIKTRI), and 294–312 (GLGLRMGRKAVSSALAWTI).

It belongs to the mitochondrial carrier (TC 2.A.29) family. SLC25A38 subfamily.

It localises to the mitochondrion inner membrane. The catalysed reaction is glycine(in) = glycine(out). Mitochondrial glycine transporter that imports glycine into the mitochondrial matrix. Plays an important role in providing glycine for the first enzymatic step in heme biosynthesis, the condensation of glycine with succinyl-CoA to produce 5-aminolevulinate (ALA) in the mitochondrial matrix. This Botryotinia fuckeliana (strain B05.10) (Noble rot fungus) protein is Mitochondrial glycine transporter.